The chain runs to 219 residues: Uracil-DNA glycosylase (219 aa).

Aspartate 59 serves as the catalytic Proton acceptor.

It belongs to the uracil-DNA glycosylase (UDG) superfamily. UNG family.

The protein localises to the cytoplasm. The enzyme catalyses Hydrolyzes single-stranded DNA or mismatched double-stranded DNA and polynucleotides, releasing free uracil.. In terms of biological role, excises uracil residues from the DNA which can arise as a result of misincorporation of dUMP residues by DNA polymerase or due to deamination of cytosine. This chain is Uracil-DNA glycosylase, found in Macrococcus caseolyticus (strain JCSC5402) (Macrococcoides caseolyticum).